A 352-amino-acid polypeptide reads, in one-letter code: Ion-translocating oxidoreductase complex subunit D (352 aa).

5 helical membrane-spanning segments follow: residues 20–40 (IMLLVLLAAVPGIAAQLWFFG), 42–62 (GTLVQILLASVSALLAEALVL), 78–109 (ALLTGLLLAVSIPPLAPWWMVVLGTVFAVIIA), 123–143 (PAMIGYVVLLISFPVQMTSWL), and 148–168 (IAVNILGFIDAIQVIFSGHTA). T187 carries the post-translational modification FMN phosphoryl threonine. 5 helical membrane passes run 214 to 234 (ILAGAGWQWVNLAWLAGGVWL), 242 to 262 (WHIPLSFLVTLALCATLGWLF), 267 to 287 (LAAPQIHLLSGATMLGAFFIL), 301 to 321 (LIFGALAGLLVWLIRSFGGYP), and 322 to 342 (DGVAFAVLLANITVPLIDYYT).

The protein belongs to the NqrB/RnfD family. As to quaternary structure, the complex is composed of six subunits: RsxA, RsxB, RsxC, RsxD, RsxE and RsxG. FMN serves as cofactor.

The protein resides in the cell inner membrane. Functionally, part of a membrane-bound complex that couples electron transfer with translocation of ions across the membrane. Required to maintain the reduced state of SoxR. The polypeptide is Ion-translocating oxidoreductase complex subunit D (Shigella dysenteriae serotype 1 (strain Sd197)).